Consider the following 209-residue polypeptide: Probable GTP-binding protein EngB (209 aa).

Residues 22–198 (TPLEIAFVGR…NRTVGSWFDA (177 aa)) enclose the EngB-type G domain. 2 residues coordinate Mg(2+): Ser37 and Thr59.

The protein belongs to the TRAFAC class TrmE-Era-EngA-EngB-Septin-like GTPase superfamily. EngB GTPase family. Mg(2+) is required as a cofactor.

Functionally, necessary for normal cell division and for the maintenance of normal septation. The chain is Probable GTP-binding protein EngB from Neisseria gonorrhoeae.